The chain runs to 67 residues: MPQLDTSTWFTTILATITTLFILFQLKISKYIYPSSPELKSMKSLKHNTPWETKWTKIYSPLSLPLQ.

The helical transmembrane segment at 8-24 threads the bilayer; the sequence is TWFTTILATITTLFILF. The residue at position 54 (K54) is an N6-acetyllysine; alternate. K54 carries the N6-succinyllysine; alternate modification. K57 is modified (N6-acetyllysine).

It belongs to the ATPase protein 8 family. Component of the ATP synthase complex composed at least of ATP5F1A/subunit alpha, ATP5F1B/subunit beta, ATP5MC1/subunit c (homooctomer), MT-ATP6/subunit a, MT-ATP8/subunit 8, ATP5ME/subunit e, ATP5MF/subunit f, ATP5MG/subunit g, ATP5MK/subunit k, ATP5MJ/subunit j, ATP5F1C/subunit gamma, ATP5F1D/subunit delta, ATP5F1E/subunit epsilon, ATP5PF/subunit F6, ATP5PB/subunit b, ATP5PD/subunit d, ATP5PO/subunit OSCP. ATP synthase complex consists of a soluble F(1) head domain (subunits alpha(3) and beta(3)) - the catalytic core - and a membrane F(0) domain - the membrane proton channel (subunits c, a, 8, e, f, g, k and j). These two domains are linked by a central stalk (subunits gamma, delta, and epsilon) rotating inside the F1 region and a stationary peripheral stalk (subunits F6, b, d, and OSCP). Interacts with PRICKLE3.

The protein resides in the mitochondrion membrane. Functionally, subunit 8, of the mitochondrial membrane ATP synthase complex (F(1)F(0) ATP synthase or Complex V) that produces ATP from ADP in the presence of a proton gradient across the membrane which is generated by electron transport complexes of the respiratory chain. ATP synthase complex consist of a soluble F(1) head domain - the catalytic core - and a membrane F(1) domain - the membrane proton channel. These two domains are linked by a central stalk rotating inside the F(1) region and a stationary peripheral stalk. During catalysis, ATP synthesis in the catalytic domain of F(1) is coupled via a rotary mechanism of the central stalk subunits to proton translocation. In vivo, can only synthesize ATP although its ATP hydrolase activity can be activated artificially in vitro. Part of the complex F(0) domain. This is ATP synthase F(0) complex subunit 8 from Talpa europaea (European mole).